The primary structure comprises 474 residues: Sulfide dehydrogenase subunit alpha (474 aa).

The propeptide occupies 1–2 (MP). [4Fe-4S] cluster is bound by residues Cys42, Cys45, Cys52, and Cys56. [3Fe-4S] cluster is bound by residues Cys101, Cys107, and Cys111.

In terms of assembly, heterodimer of alpha and beta subunits. FAD serves as cofactor. Requires [3Fe-4S] cluster as cofactor. [4Fe-4S] cluster is required as a cofactor.

The protein localises to the cytoplasm. The enzyme catalyses n sulfur + hydrogen sulfide + NADP(+) = (n+1) sulfur + NADPH. It carries out the reaction 2 reduced [2Fe-2S]-[ferredoxin] + NADP(+) + H(+) = 2 oxidized [2Fe-2S]-[ferredoxin] + NADPH. Its function is as follows. A bifunctional enzyme that catalyzes the reduction of elemental sulfur or polysulfide to hydrogen sulfide with NADPH as electron donor. Also functions as a reduced ferredoxin:NADP oxidoreductase with a very high affinity for reduced ferredoxin. Exhibits a broad specificity for various physiological and non-physiological substrates with varied reduction potentials such as methyl viologen, benzyl viologen, FAD, FMN, methylene blue, 2,6-dichlorophenolindophenol (DCIP), cytochrome C and ferricyanide with highest preference for benzyl viologen. Does not reduce fumarate, succinate, nitrate, nitrite, sulfate, sulfite or protons. Does not possess any hydrogenase activity or NADPH-dependent glutamate synthase activity. The polypeptide is Sulfide dehydrogenase subunit alpha (Pyrococcus furiosus (strain ATCC 43587 / DSM 3638 / JCM 8422 / Vc1)).